The chain runs to 476 residues: Bifunctional protein HldE (476 aa).

The ribokinase stretch occupies residues 1 to 319; it reads MKPTLPNYDQ…EAIHGSQDSG (319 aa). 195-198 lines the ATP pocket; it reads NMLE. Residue Asp264 is part of the active site. A cytidylyltransferase region spans residues 344–476; it reads MTNGCFDILH…IIEAIKGGRG (133 aa).

It in the N-terminal section; belongs to the carbohydrate kinase PfkB family. This sequence in the C-terminal section; belongs to the cytidylyltransferase family. In terms of assembly, homodimer.

It catalyses the reaction D-glycero-beta-D-manno-heptose 7-phosphate + ATP = D-glycero-beta-D-manno-heptose 1,7-bisphosphate + ADP + H(+). It carries out the reaction D-glycero-beta-D-manno-heptose 1-phosphate + ATP + H(+) = ADP-D-glycero-beta-D-manno-heptose + diphosphate. The protein operates within nucleotide-sugar biosynthesis; ADP-L-glycero-beta-D-manno-heptose biosynthesis; ADP-L-glycero-beta-D-manno-heptose from D-glycero-beta-D-manno-heptose 7-phosphate: step 1/4. Its pathway is nucleotide-sugar biosynthesis; ADP-L-glycero-beta-D-manno-heptose biosynthesis; ADP-L-glycero-beta-D-manno-heptose from D-glycero-beta-D-manno-heptose 7-phosphate: step 3/4. Its function is as follows. Catalyzes the phosphorylation of D-glycero-D-manno-heptose 7-phosphate at the C-1 position to selectively form D-glycero-beta-D-manno-heptose-1,7-bisphosphate. Catalyzes the ADP transfer from ATP to D-glycero-beta-D-manno-heptose 1-phosphate, yielding ADP-D-glycero-beta-D-manno-heptose. The polypeptide is Bifunctional protein HldE (Aliivibrio fischeri (strain ATCC 700601 / ES114) (Vibrio fischeri)).